Here is a 278-residue protein sequence, read N- to C-terminus: Elongation factor Ts (278 aa).

Residues 80–83 (TDFV) form an involved in Mg(2+) ion dislocation from EF-Tu region.

The protein belongs to the EF-Ts family.

It is found in the cytoplasm. Its function is as follows. Associates with the EF-Tu.GDP complex and induces the exchange of GDP to GTP. It remains bound to the aminoacyl-tRNA.EF-Tu.GTP complex up to the GTP hydrolysis stage on the ribosome. This is Elongation factor Ts from Renibacterium salmoninarum (strain ATCC 33209 / DSM 20767 / JCM 11484 / NBRC 15589 / NCIMB 2235).